The sequence spans 136 residues: Classical arabinogalactan protein 11 (136 aa).

An N-terminal signal peptide occupies residues 1-20 (MARLFVVVALLALAVGTVFA). 3 stretches are compositionally biased toward low complexity: residues 24 to 56 (PSAAPTASPTKSPTKAPAAAPKSSAAAPKASSP), 68 to 81 (SAASPSDSAEAPTV), and 89 to 107 (PEADGPSSDGPSSDGPAAA). The interval 24-115 (PSAAPTASPT…AAESPKSGAT (92 aa)) is disordered. A lipid anchor (GPI-anchor amidated serine) is attached at serine 112. A propeptide spans 113-136 (GATTNVKLSIAGTVAAAGFFIFSL) (removed in mature form).

It belongs to the classical AGP family. O-glycosylated on the hydroxyproline residues.

It is found in the cell membrane. In terms of biological role, proteoglycan that seems to be implicated in diverse developmental roles such as differentiation, cell-cell recognition, embryogenesis and programmed cell death. The chain is Classical arabinogalactan protein 11 (AGP11) from Arabidopsis thaliana (Mouse-ear cress).